A 595-amino-acid chain; its full sequence is Elongation factor 4 (595 aa).

The region spanning 2 to 184 is the tr-type G domain; that stretch reads SHIRNFSIIA…RLVATIPPPT (183 aa). GTP-binding positions include 14–19 and 131–134; these read DHGKST and NKMD.

Belongs to the TRAFAC class translation factor GTPase superfamily. Classic translation factor GTPase family. LepA subfamily.

It localises to the cell inner membrane. The enzyme catalyses GTP + H2O = GDP + phosphate + H(+). In terms of biological role, required for accurate and efficient protein synthesis under certain stress conditions. May act as a fidelity factor of the translation reaction, by catalyzing a one-codon backward translocation of tRNAs on improperly translocated ribosomes. Back-translocation proceeds from a post-translocation (POST) complex to a pre-translocation (PRE) complex, thus giving elongation factor G a second chance to translocate the tRNAs correctly. Binds to ribosomes in a GTP-dependent manner. The sequence is that of Elongation factor 4 from Pseudomonas syringae pv. tomato (strain ATCC BAA-871 / DC3000).